Reading from the N-terminus, the 130-residue chain is Small ribosomal subunit protein eS8 (130 aa).

This sequence belongs to the eukaryotic ribosomal protein eS8 family. Part of the 30S ribosomal subunit.

This Ignicoccus hospitalis (strain KIN4/I / DSM 18386 / JCM 14125) protein is Small ribosomal subunit protein eS8.